We begin with the raw amino-acid sequence, 439 residues long: Glutamate--tRNA ligase 2 (439 aa).

The 'HIGH' region motif lies at 6–16 (PSPTGDMHIGN). The 'KMSKS' region motif lies at 232–236 (KMSKR). Lysine 235 contacts ATP.

It belongs to the class-I aminoacyl-tRNA synthetase family. Glutamate--tRNA ligase type 1 subfamily. As to quaternary structure, monomer.

The protein localises to the cytoplasm. The catalysed reaction is tRNA(Glu) + L-glutamate + ATP = L-glutamyl-tRNA(Glu) + AMP + diphosphate. Catalyzes the attachment of glutamate to tRNA(Glu) in a two-step reaction: glutamate is first activated by ATP to form Glu-AMP and then transferred to the acceptor end of tRNA(Glu). This is Glutamate--tRNA ligase 2 from Helicobacter pylori (strain HPAG1).